Consider the following 228-residue polypeptide: Deoxyguanosine kinase (228 aa).

Residue 8–16 (GPIGAGKSS) participates in ATP binding. Substrate-binding residues include Glu32, Tyr44, and Gln55. Asp78 functions as the Proton acceptor in the catalytic mechanism. Arg79, Asp84, and Glu149 together coordinate substrate.

Belongs to the DCK/DGK family. As to quaternary structure, heterodimer of a deoxyadenosine (DAK) and a deoxyguanosine kinase (DGK).

It carries out the reaction 2'-deoxyguanosine + ATP = dGMP + ADP + H(+). In terms of biological role, DGK/DAK plays an essential role in generating the deoxyribonucleotide precursors, dGTP and dATP, for DNA metabolism. The chain is Deoxyguanosine kinase from Lactobacillus acidophilus (strain ATCC 700396 / NCK56 / N2 / NCFM).